A 101-amino-acid polypeptide reads, in one-letter code: Small ribosomal subunit protein uS14A (101 aa).

Basic and acidic residues-rich tracts occupy residues 28–44 and 61–70; these read KETI…RAEA and RNRDAADGRP. The interval 28–74 is disordered; the sequence is KETIRRPSSSEDERAEARAALQRLPRDASPVRLRNRDAADGRPRGHL.

Belongs to the universal ribosomal protein uS14 family. As to quaternary structure, part of the 30S ribosomal subunit. Contacts proteins S3 and S10.

Its function is as follows. Binds 16S rRNA, required for the assembly of 30S particles and may also be responsible for determining the conformation of the 16S rRNA at the A site. This chain is Small ribosomal subunit protein uS14A, found in Rhodococcus jostii (strain RHA1).